Reading from the N-terminus, the 504-residue chain is Porphyrin biosynthesis protein HemD (504 aa).

Positions 1-248 (MEHGFVALVG…LSEKFSWFMK (248 aa)) are uroporphyrinogen-III C-methyltransferase. Positions 249 to 504 (KPLFGTKILV…LEIGGGNIYD (256 aa)) are uroporphyrinogen-III synthase.

It in the N-terminal section; belongs to the precorrin methyltransferase family. The protein in the C-terminal section; belongs to the uroporphyrinogen-III synthase family.

The catalysed reaction is uroporphyrinogen III + 2 S-adenosyl-L-methionine = precorrin-2 + 2 S-adenosyl-L-homocysteine + H(+). It carries out the reaction hydroxymethylbilane = uroporphyrinogen III + H2O. The protein operates within cofactor biosynthesis; adenosylcobalamin biosynthesis; precorrin-2 from uroporphyrinogen III: step 1/1. Its pathway is porphyrin-containing compound metabolism; siroheme biosynthesis; precorrin-2 from uroporphyrinogen III: step 1/1. In terms of biological role, may catalyze sequential reactions to synthesize uroporphyrinogen III from hydroxymethylbilane (HMB) and then precorrin-2, which are intermediate compounds in both vitamin B12 and siroheme biosyntheses. This Ruminiclostridium josui (Clostridium josui) protein is Porphyrin biosynthesis protein HemD (hemD).